Consider the following 302-residue polypeptide: Putative glycine N-acyltransferase-like protein 1B (302 aa).

Belongs to the glycine N-acyltransferase family.

It catalyses the reaction an acyl-CoA + L-glutamine = an N(2)-acyl-L-glutamine + CoA + H(+). Functionally, putative acyltransferase which transfers an acyl group to the N-terminus of glutamine. Can use phenylacetyl-CoA as an acyl donor. The polypeptide is Putative glycine N-acyltransferase-like protein 1B (Homo sapiens (Human)).